A 725-amino-acid polypeptide reads, in one-letter code: Homeobox protein unc-62 (725 aa).

Residues 133-218 enclose the MEIS N-terminal domain; it reads SSDVCSSASF…PLDIVGDERA (86 aa). Disordered stretches follow at residues 214 to 258, 295 to 317, 329 to 359, 386 to 419, 491 to 555, and 615 to 661; these read GDER…PYEP, SSSSSQPQPGDHPLANGGTLHST, VSSPSTCSSGGLRQDSTPLSGETPMANGNSM, SLHQHHLHHPHHFPHHQLQPPAHHQDFLLPPPPQ, VKME…KRKV, and IDQN…PDPT. Residues 219 to 239 show a composition bias toward low complexity; that stretch reads SSSQPPMSPGSMGHHGHSGSP. Over residues 388–400 the composition is skewed to basic residues; it reads HQHHLHHPHHFPH. Residues 498-508 are compositionally biased toward low complexity; the sequence is SVSSSKSGGKK. Over residues 541 to 550 the composition is skewed to polar residues; the sequence is LSDSANGSQN. The segment at residues 552 to 614 is a DNA-binding region (homeobox; TALE-type); it reads KRKVPKVFSK…NARRRIVQPM (63 aa).

The protein belongs to the TALE/MEIS homeobox family.

Its subcellular location is the nucleus. Acts redundantly with ceh-20 and ceh-40 to perform overlapping roles during embryogenesis. Required for postembryonic development of the ectoderm, including the Q, V and P cell lineages, playing a crucial role in ensuring that these cells and their descendants undergo their invariant patterns of cell division, migration, fusion and morphogenesis. Has a role in the mig-13 pathway to promote anterior migration of neuroblasts in the Q lineage. Required for multiple roles in regulating vulva development. This chain is Homeobox protein unc-62 (unc-62), found in Caenorhabditis briggsae.